The primary structure comprises 424 residues: Histidine--tRNA ligase (424 aa).

Belongs to the class-II aminoacyl-tRNA synthetase family. As to quaternary structure, homodimer.

Its subcellular location is the cytoplasm. It catalyses the reaction tRNA(His) + L-histidine + ATP = L-histidyl-tRNA(His) + AMP + diphosphate + H(+). This is Histidine--tRNA ligase from Marinomonas sp. (strain MWYL1).